A 300-amino-acid polypeptide reads, in one-letter code: Glycine--tRNA ligase alpha subunit (300 aa).

The protein belongs to the class-II aminoacyl-tRNA synthetase family. Tetramer of two alpha and two beta subunits.

The protein resides in the cytoplasm. It catalyses the reaction tRNA(Gly) + glycine + ATP = glycyl-tRNA(Gly) + AMP + diphosphate. In Pseudoalteromonas translucida (strain TAC 125), this protein is Glycine--tRNA ligase alpha subunit.